Consider the following 215-residue polypeptide: Ribonuclease T (215 aa).

The 175-residue stretch at 20 to 194 (VVIDVETAGF…YDTERTAVLF (175 aa)) folds into the Exonuclease domain. Residues Asp-23, Glu-25, His-181, and Asp-186 each contribute to the Mg(2+) site. His-181 acts as the Proton donor/acceptor in catalysis.

It belongs to the RNase T family. In terms of assembly, homodimer. Requires Mg(2+) as cofactor.

Its function is as follows. Trims short 3' overhangs of a variety of RNA species, leaving a one or two nucleotide 3' overhang. Responsible for the end-turnover of tRNA: specifically removes the terminal AMP residue from uncharged tRNA (tRNA-C-C-A). Also appears to be involved in tRNA biosynthesis. The protein is Ribonuclease T of Salmonella paratyphi A (strain ATCC 9150 / SARB42).